A 179-amino-acid chain; its full sequence is MHPELDLVYVGKIVGTHGVKGELKVISLTDIENRFNELDRVYLVNEQDHYDPIIAHIESSFTHKNMEIVKFSEWDDINQVEGFHDWYIKIPREERPQLEEDEYYFDQITGLSVVTVEDEFLGTVTNIYQTGSNDVYEVSKEQDDKPILIPALYEVVKKIDLDEQIMIVDLPEGLLDEEE.

Residues 99-174 enclose the PRC barrel domain; it reads EEDEYYFDQI…IMIVDLPEGL (76 aa).

Belongs to the RimM family. In terms of assembly, binds ribosomal protein uS19.

It is found in the cytoplasm. Functionally, an accessory protein needed during the final step in the assembly of 30S ribosomal subunit, possibly for assembly of the head region. Essential for efficient processing of 16S rRNA. May be needed both before and after RbfA during the maturation of 16S rRNA. It has affinity for free ribosomal 30S subunits but not for 70S ribosomes. The protein is Ribosome maturation factor RimM of Natranaerobius thermophilus (strain ATCC BAA-1301 / DSM 18059 / JW/NM-WN-LF).